We begin with the raw amino-acid sequence, 1025 residues long: Leucyl-cystinyl aminopeptidase (1025 aa).

N-acetylmethionine is present on methionine 1. Topologically, residues 1–109 (METFTNDRLQ…DGTCSVPSAR (109 aa)) are cytoplasmic. A Dileucine internalization motif motif is present at residues 53-54 (LL). A Phosphotyrosine modification is found at tyrosine 70. Residues 76 to 77 (LL) carry the Dileucine internalization motif motif. Phosphoserine; by PKC/PRKCZ; in vitro occurs at positions 80 and 91. Residues 96–101 (RQSPDG) form a tankyrase binding region. Residues 110–131 (TLVICVFVIVVAVSVIMVIYLL) form a helical; Signal-anchor for type II membrane protein membrane-spanning segment. The Extracellular segment spans residues 132–1025 (PRCTFTKEGC…RNLKTLTLWL (894 aa)). N-linked (GlcNAc...) asparagine glycans are attached at residues asparagine 145, asparagine 184, asparagine 215, asparagine 256, and asparagine 266. Glutamate 295 is a substrate binding site. Residues asparagine 368 and asparagine 374 are each glycosylated (N-linked (GlcNAc...) asparagine). Substrate is bound at residue 428–432 (GAMEN). A glycan (N-linked (GlcNAc...) asparagine) is linked at asparagine 447. Zn(2+) is bound at residue histidine 464. Glutamate 465 (proton acceptor) is an active-site residue. Positions 468 and 487 each coordinate Zn(2+). N-linked (GlcNAc...) asparagine glycans are attached at residues asparagine 525, asparagine 578, asparagine 664, asparagine 682, asparagine 695, asparagine 758, asparagine 834, asparagine 850, and asparagine 989.

This sequence belongs to the peptidase M1 family. As to quaternary structure, homodimer. Binds tankyrases 1 and 2. Zn(2+) is required as a cofactor. Post-translationally, N-glycosylated. As to expression, highly expressed in heart, brain, spleen, lung, kidney and white adipose tissue. Detected at lower levels in skeletal muscle and liver.

The protein resides in the cell membrane. It is found in the endomembrane system. It carries out the reaction Release of an N-terminal amino acid, Cys-|-Xaa-, in which the half-cystine residue is involved in a disulfide loop, notably in oxytocin or vasopressin. Hydrolysis rates on a range of aminoacyl arylamides exceed that for the cystinyl derivative, however.. Release of an N-terminal amino acid, cleave before cysteine, leucine as well as other amino acids. Degrades peptide hormones such as oxytocin, vasopressin and angiotensin III, and plays a role in maintaining homeostasis during pregnancy. May be involved in the inactivation of neuronal peptides in the brain. Cleaves Met-enkephalin and dynorphin. Binds angiotensin IV and may be the angiotensin IV receptor in the brain. This chain is Leucyl-cystinyl aminopeptidase (Lnpep), found in Rattus norvegicus (Rat).